The chain runs to 189 residues: uncharacterized protein (189 aa).

This sequence belongs to the inositol monophosphatase superfamily.

This is an uncharacterized protein from Leptospira biflexa.